The chain runs to 757 residues: Chloride channel protein C (757 aa).

The Cytoplasmic segment spans residues 1–96 (MGSSLNKPLS…LHLKKTFGKW (96 aa)). Transmembrane regions (helical) follow at residues 97-117 (IICL…KMVV), 141-161 (FLTF…MVIV), 196-216 (IVSL…GPMI), 253-273 (FISI…IGGV), 292-312 (TFFT…GIGS), 337-357 (LLCF…FVFL), 378-398 (FEAL…SFIF), 462-482 (LLVF…LWVA), 484-504 (GLFV…GQTI), 506-526 (MWFT…AMMA), and 535-555 (IVVI…IILA). CBS domains are found at residues 600–667 (MSKN…TGEE) and 710–757 (MNSS…NDLF).

The protein belongs to the chloride channel (TC 2.A.49) family.

Its subcellular location is the membrane. Functionally, voltage-gated chloride channel. Chloride channels may have several functions including the regulation of cell volume, membrane potential stabilization and signal transduction. The chain is Chloride channel protein C (clcC) from Dictyostelium discoideum (Social amoeba).